The following is a 370-amino-acid chain: MLKEFEIEPLLKDKAPHQTKAVVAMSGGVDSSVAAALLHNLGYKVVGVTLQLYGTDGNANARKGACCAGQDIYDAKRVAESVGFPHYLLNYEEIFKKEVIEDFASTYMRGETPIPCVRCNQTVKFRDLLQVTKNLGADVLVTGHYVRRLEKNGEVKLCRSIDKSKDQSYFLFATTQEQLKLLRFPLGGFYKSDIRKLAKYFSLQISEKQDSQDICFVSESYSKTIAKLAPQSVQKGKIVDVNGKVLGEHSGIVNFTVGQRKGLGIAHNEPLYVIKINTENNEVIVGPINVLMQKKILIKELNWLEQPKEGMEVTVKLRSSHVGSLATIHSTDEKNKACVILNDDYFGISPGQACVAYKDEQVIGGGWICS.

ATP-binding positions include 24 to 31 (AMSGGVDS) and Leu-50. Cys-119 functions as the Nucleophile in the catalytic mechanism. Cys-119 and Cys-215 are oxidised to a cystine. Gly-143 serves as a coordination point for ATP. The tract at residues 165-167 (KDQ) is interaction with tRNA. Cys-215 serves as the catalytic Cysteine persulfide intermediate.

Belongs to the MnmA/TRMU family.

The protein resides in the cytoplasm. The catalysed reaction is S-sulfanyl-L-cysteinyl-[protein] + uridine(34) in tRNA + AH2 + ATP = 2-thiouridine(34) in tRNA + L-cysteinyl-[protein] + A + AMP + diphosphate + H(+). Its function is as follows. Catalyzes the 2-thiolation of uridine at the wobble position (U34) of tRNA, leading to the formation of s(2)U34. This Wolbachia pipientis wMel protein is tRNA-specific 2-thiouridylase MnmA.